Reading from the N-terminus, the 321-residue chain is L-carnitine dehydrogenase (321 aa).

14-19 (GSGVIG) is a binding site for NAD(+). The important for catalytic activity stretch occupies residues 317–321 (MTFSE).

Belongs to the 3-hydroxyacyl-CoA dehydrogenase family. L-carnitine dehydrogenase subfamily. In terms of assembly, homodimer.

Its subcellular location is the cytoplasm. It carries out the reaction carnitine + NAD(+) = 3-dehydrocarnitine + NADH + H(+). Its pathway is amine and polyamine metabolism; carnitine metabolism. The enzyme activity is strongly inhibited by Ag(+), Ni(+), Hg(+), and p-chloromercuribenzoate, and partially inhibited by Li(+), Ca(2+), Mn(2+), Co(2+), Cu(2+), and Zn(2+). Its function is as follows. Catalyzes the NAD(+)-dependent oxidation of L-carnitine to 3-dehydrocarnitine. Is specific for L-carnitine and NAD(+) as substrates since D-carnitine, other carnitine analogs such as choline and betaine, and NADP(+) are not substrates. Despite a high similarity to 3-hydroxyacyl-CoA dehydrogenases, cannot dehydrogenate 3-hydroxybutylate and 3-hydroxybutyl-CoA. Is probably involved in a L-carnitine degradation pathway that allows Pseudomonas sp. strain NBRC 13558 to grow on L-carnitine as the sole source of carbon and nitrogen. The polypeptide is L-carnitine dehydrogenase (Pseudomonas sp).